The chain runs to 84 residues: RNA-binding protein Hfq (84 aa).

One can recognise a Sm domain in the interval 10 to 69; it reads EPFLNTLRREHVPVSIYLVNGIKLQGQIESFDQYVVLLRNTVTQMVFKHAISTIVPGRAV.

The protein belongs to the Hfq family. As to quaternary structure, homohexamer.

Its function is as follows. RNA chaperone that binds small regulatory RNA (sRNAs) and mRNAs to facilitate mRNA translational regulation in response to envelope stress, environmental stress and changes in metabolite concentrations. Also binds with high specificity to tRNAs. The polypeptide is RNA-binding protein Hfq (Verminephrobacter eiseniae (strain EF01-2)).